A 436-amino-acid polypeptide reads, in one-letter code: 3-ketoacyl-CoA thiolase (436 aa).

Residue Cys-99 is the Acyl-thioester intermediate of the active site. Residues His-392 and Cys-422 each act as proton acceptor in the active site.

The protein belongs to the thiolase-like superfamily. Thiolase family. Heterotetramer of two alpha chains (FadJ) and two beta chains (FadI).

The protein localises to the cytoplasm. The enzyme catalyses an acyl-CoA + acetyl-CoA = a 3-oxoacyl-CoA + CoA. It participates in lipid metabolism; fatty acid beta-oxidation. Catalyzes the final step of fatty acid oxidation in which acetyl-CoA is released and the CoA ester of a fatty acid two carbons shorter is formed. This Photobacterium profundum (strain SS9) protein is 3-ketoacyl-CoA thiolase.